Here is a 267-residue protein sequence, read N- to C-terminus: Putative transcription factor Ovo-like 1 (267 aa).

4 consecutive C2H2-type zinc fingers follow at residues 118-140 (FTCR…MKCH), 146-168 (HLCT…VRTH), 174-197 (YKCS…KKIH), and 213-235 (YVCE…LKEH).

As to expression, expressed in fetal kidney, and also in adult pancreas and placenta. Not expressed in intestine, peripheral blood lymphocytes and ovary.

The protein localises to the nucleus. In terms of biological role, putative transcription factor. Involved in hair formation and spermatogenesis. May function in the differentiation and/or maintenance of the urogenital system. This chain is Putative transcription factor Ovo-like 1 (OVOL1), found in Homo sapiens (Human).